The following is a 410-amino-acid chain: Cysteine desulfurase IscS (410 aa).

Pyridoxal 5'-phosphate-binding positions include 80-81, asparagine 160, glutamine 188, and 208-210; these read AT and SGH. Lysine 211 carries the N6-(pyridoxal phosphate)lysine modification. Threonine 248 provides a ligand contact to pyridoxal 5'-phosphate. Catalysis depends on cysteine 334, which acts as the Cysteine persulfide intermediate. Cysteine 334 serves as a coordination point for [2Fe-2S] cluster.

This sequence belongs to the class-V pyridoxal-phosphate-dependent aminotransferase family. NifS/IscS subfamily. Homodimer. Forms a heterotetramer with IscU, interacts with other sulfur acceptors. It depends on pyridoxal 5'-phosphate as a cofactor.

The protein resides in the cytoplasm. The enzyme catalyses (sulfur carrier)-H + L-cysteine = (sulfur carrier)-SH + L-alanine. The protein operates within cofactor biosynthesis; iron-sulfur cluster biosynthesis. In terms of biological role, master enzyme that delivers sulfur to a number of partners involved in Fe-S cluster assembly, tRNA modification or cofactor biosynthesis. Catalyzes the removal of elemental sulfur atoms from cysteine to produce alanine. Functions as a sulfur delivery protein for Fe-S cluster synthesis onto IscU, an Fe-S scaffold assembly protein, as well as other S acceptor proteins. This is Cysteine desulfurase IscS from Rickettsia bellii (strain OSU 85-389).